The following is a 101-amino-acid chain: Small ribosomal subunit protein uS14A (101 aa).

The tract at residues 29–73 (AIISSPSTPADARAAAQSELNRQPRDASPVRVRNRDAVDGRPRGH) is disordered. Basic and acidic residues predominate over residues 61–70 (RNRDAVDGRP).

It belongs to the universal ribosomal protein uS14 family. Part of the 30S ribosomal subunit. Contacts proteins S3 and S10.

Its function is as follows. Binds 16S rRNA, required for the assembly of 30S particles and may also be responsible for determining the conformation of the 16S rRNA at the A site. The sequence is that of Small ribosomal subunit protein uS14A from Mycolicibacterium gilvum (strain PYR-GCK) (Mycobacterium gilvum (strain PYR-GCK)).